A 44-amino-acid polypeptide reads, in one-letter code: Small ribosomal subunit protein eS31 (44 aa).

Residues cysteine 18, cysteine 21, cysteine 35, and cysteine 38 each contribute to the Zn(2+) site. The C4-type zinc-finger motif lies at cysteine 18–cysteine 38.

It belongs to the eukaryotic ribosomal protein eS31 family. In terms of assembly, part of the 30S ribosomal subunit. Requires Zn(2+) as cofactor.

This Halobacterium salinarum (strain ATCC 29341 / DSM 671 / R1) protein is Small ribosomal subunit protein eS31.